A 400-amino-acid polypeptide reads, in one-letter code: Tryptophan synthase beta chain (400 aa).

Lys-92 is modified (N6-(pyridoxal phosphate)lysine).

Belongs to the TrpB family. Tetramer of two alpha and two beta chains. It depends on pyridoxal 5'-phosphate as a cofactor.

The catalysed reaction is (1S,2R)-1-C-(indol-3-yl)glycerol 3-phosphate + L-serine = D-glyceraldehyde 3-phosphate + L-tryptophan + H2O. The protein operates within amino-acid biosynthesis; L-tryptophan biosynthesis; L-tryptophan from chorismate: step 5/5. Its function is as follows. The beta subunit is responsible for the synthesis of L-tryptophan from indole and L-serine. This chain is Tryptophan synthase beta chain, found in Chromobacterium violaceum (strain ATCC 12472 / DSM 30191 / JCM 1249 / CCUG 213 / NBRC 12614 / NCIMB 9131 / NCTC 9757 / MK).